A 425-amino-acid chain; its full sequence is Serine--tRNA ligase (425 aa).

Position 231–233 (231–233 (TAE)) interacts with L-serine. ATP contacts are provided by residues 262–264 (RTE) and Val278. Glu285 is a binding site for L-serine. 349 to 352 (EVTS) is an ATP binding site. Thr384 is an L-serine binding site.

The protein belongs to the class-II aminoacyl-tRNA synthetase family. Type-1 seryl-tRNA synthetase subfamily. In terms of assembly, homodimer. The tRNA molecule binds across the dimer.

It is found in the cytoplasm. The catalysed reaction is tRNA(Ser) + L-serine + ATP = L-seryl-tRNA(Ser) + AMP + diphosphate + H(+). The enzyme catalyses tRNA(Sec) + L-serine + ATP = L-seryl-tRNA(Sec) + AMP + diphosphate + H(+). Its pathway is aminoacyl-tRNA biosynthesis; selenocysteinyl-tRNA(Sec) biosynthesis; L-seryl-tRNA(Sec) from L-serine and tRNA(Sec): step 1/1. Its function is as follows. Catalyzes the attachment of serine to tRNA(Ser). Is also able to aminoacylate tRNA(Sec) with serine, to form the misacylated tRNA L-seryl-tRNA(Sec), which will be further converted into selenocysteinyl-tRNA(Sec). This chain is Serine--tRNA ligase, found in Dictyoglomus turgidum (strain DSM 6724 / Z-1310).